The chain runs to 353 residues: Ion-translocating oxidoreductase complex subunit D (353 aa).

Transmembrane regions (helical) follow at residues 20 to 39 (LMRL…WYFF), 68 to 88 (PISH…LGIC), and 129 to 149 (VMLL…LTLV). T187 carries the FMN phosphoryl threonine modification. Transmembrane regions (helical) follow at residues 215–235 (LALG…FLIS), 238–258 (AIAW…SFIG), 267–287 (ASTM…FILT), and 300–320 (IIVG…GGYP).

Belongs to the NqrB/RnfD family. The complex is composed of six subunits: RnfA, RnfB, RnfC, RnfD, RnfE and RnfG. FMN serves as cofactor.

It is found in the cell inner membrane. Functionally, part of a membrane-bound complex that couples electron transfer with translocation of ions across the membrane. This is Ion-translocating oxidoreductase complex subunit D from Colwellia psychrerythraea (strain 34H / ATCC BAA-681) (Vibrio psychroerythus).